A 520-amino-acid polypeptide reads, in one-letter code: Peptide chain release factor 3 (520 aa).

In terms of domain architecture, tr-type G spans 8–277; the sequence is ESRKTFAIIS…HAPMPNARQT (270 aa). GTP is bound by residues 17–24, 85–89, and 139–142; these read SHPDAGKT, DTPGH, and NKLD.

This sequence belongs to the TRAFAC class translation factor GTPase superfamily. Classic translation factor GTPase family. PrfC subfamily.

It is found in the cytoplasm. Increases the formation of ribosomal termination complexes and stimulates activities of RF-1 and RF-2. It binds guanine nucleotides and has strong preference for UGA stop codons. It may interact directly with the ribosome. The stimulation of RF-1 and RF-2 is significantly reduced by GTP and GDP, but not by GMP. The sequence is that of Peptide chain release factor 3 from Staphylococcus saprophyticus subsp. saprophyticus (strain ATCC 15305 / DSM 20229 / NCIMB 8711 / NCTC 7292 / S-41).